We begin with the raw amino-acid sequence, 417 residues long: Serine hydroxymethyltransferase 1 (417 aa).

(6S)-5,6,7,8-tetrahydrofolate is bound by residues L121 and 125–127; that span reads GHL. At K229 the chain carries N6-(pyridoxal phosphate)lysine. 354 to 356 provides a ligand contact to (6S)-5,6,7,8-tetrahydrofolate; sequence SPF.

Belongs to the SHMT family. As to quaternary structure, homodimer. It depends on pyridoxal 5'-phosphate as a cofactor.

The protein localises to the cytoplasm. It carries out the reaction (6R)-5,10-methylene-5,6,7,8-tetrahydrofolate + glycine + H2O = (6S)-5,6,7,8-tetrahydrofolate + L-serine. The protein operates within one-carbon metabolism; tetrahydrofolate interconversion. Its pathway is amino-acid biosynthesis; glycine biosynthesis; glycine from L-serine: step 1/1. Catalyzes the reversible interconversion of serine and glycine with tetrahydrofolate (THF) serving as the one-carbon carrier. This reaction serves as the major source of one-carbon groups required for the biosynthesis of purines, thymidylate, methionine, and other important biomolecules. Also exhibits THF-independent aldolase activity toward beta-hydroxyamino acids, producing glycine and aldehydes, via a retro-aldol mechanism. The polypeptide is Serine hydroxymethyltransferase 1 (Pseudomonas syringae pv. syringae (strain B728a)).